We begin with the raw amino-acid sequence, 61 residues long: Small ribosomal subunit protein uS14 (61 aa).

The Zn(2+) site is built by Cys24, Cys27, Cys40, and Cys43.

This sequence belongs to the universal ribosomal protein uS14 family. Zinc-binding uS14 subfamily. In terms of assembly, part of the 30S ribosomal subunit. Contacts proteins S3 and S10. Requires Zn(2+) as cofactor.

Its function is as follows. Binds 16S rRNA, required for the assembly of 30S particles and may also be responsible for determining the conformation of the 16S rRNA at the A site. The polypeptide is Small ribosomal subunit protein uS14 (Halalkalibacterium halodurans (strain ATCC BAA-125 / DSM 18197 / FERM 7344 / JCM 9153 / C-125) (Bacillus halodurans)).